The primary structure comprises 228 residues: Dehydrin Rab25 (228 aa).

2 disordered regions span residues 1–68 and 115–228; these read MAEH…EAPH and AGVT…HGHH. Basic and acidic residues-rich tracts occupy residues 169-187 and 212-228; these read KEKI…EQKQ and KGIV…HGHH.

This sequence belongs to the plant dehydrin family.

This is Dehydrin Rab25 (RAB25) from Oryza sativa subsp. japonica (Rice).